The primary structure comprises 88 residues: U1-hexatoxin-Iw1d (88 aa).

Residues 1–17 form the signal peptide; sequence LKFVVLICLVIMASTSA. At Gln-18 the chain carries Pyrrolidone carboxylic acid. Intrachain disulfides connect Cys-20/Cys-31, Cys-25/Cys-39, Cys-30/Cys-65, Cys-49/Cys-73, and Cys-67/Cys-80. A propeptide spanning residues 86 to 88 is cleaved from the precursor; the sequence is RSE.

It belongs to the MIT-like AcTx family. Expressed by the venom gland.

It localises to the secreted. The protein is U1-hexatoxin-Iw1d of Illawarra wisharti (Illawarra funnel-web spider).